Here is a 216-residue protein sequence, read N- to C-terminus: Transmembrane protein 186 (216 aa).

Over 1 to 68 the chain is Mitochondrial matrix; the sequence is MAFLLRAVPR…IYRFNAIRAL (68 aa). A helical membrane pass occupies residues 69–91; that stretch reads GFLSRLKLAQTAVTVVALPPGFY. Residues 92–103 are Mitochondrial intermembrane-facing; that stretch reads CYSQGLMTLSSL. A helical membrane pass occupies residues 104 to 124; it reads GLMSGIASFALVMLCWMSHFF. Topologically, residues 125-216 are mitochondrial matrix; it reads RRLVGILYVN…GTLATLKNSK (92 aa).

This sequence belongs to the TMEM186 family. As to quaternary structure, part of the mitochondrial complex I assembly/MCIA complex that comprises at least the core subunits TMEM126B, NDUFAF1, ECSIT and ACAD9 and complement subunits such as COA1 and TMEM186. Interacts with MT-ND3.

Its subcellular location is the mitochondrion inner membrane. As part of the MCIA complex, required for efficient assembly of the mitochondrial complex I. This chain is Transmembrane protein 186, found in Rattus norvegicus (Rat).